Here is a 214-residue protein sequence, read N- to C-terminus: Uridine kinase (214 aa).

ATP is bound at residue 15 to 22 (GASASGKS).

It belongs to the uridine kinase family.

The protein localises to the cytoplasm. It carries out the reaction uridine + ATP = UMP + ADP + H(+). It catalyses the reaction cytidine + ATP = CMP + ADP + H(+). The protein operates within pyrimidine metabolism; CTP biosynthesis via salvage pathway; CTP from cytidine: step 1/3. Its pathway is pyrimidine metabolism; UMP biosynthesis via salvage pathway; UMP from uridine: step 1/1. The chain is Uridine kinase from Aeromonas salmonicida (strain A449).